The following is a 654-amino-acid chain: Transcription factor E2-alpha (654 aa).

Residues 19-27 carry the 9aaTAD motif; that stretch reads LLDFSMMFP. Residues 31–103 are disordered; sequence TNGKGRPASL…LGPGLGGKSG (73 aa). Low complexity predominate over residues 55 to 68; the sequence is SSGSWGSGDQSSSS. The span at 69 to 79 shows a compositional bias: polar residues; the sequence is FDPSRTFSEGT. Low complexity predominate over residues 84–94; sequence SHSSLSSSTFL. Serine 134 and serine 139 each carry phosphoserine. Disordered regions lie at residues 135–205, 239–268, 292–329, and 343–385; these read PGPL…SAKT, MLGG…FGGL, SFSS…GSSG, and DHSS…YDGG. Residues 147–156 are compositionally biased toward low complexity; the sequence is SQYYPSYSGS. The short motif at 170–176 is the Nuclear localization signal element; it reads PKKVRKV. The span at 256–268 shows a compositional bias: low complexity; the sequence is VGSSGSSSTFGGL. Positions 343–354 are enriched in low complexity; sequence DHSSNNFSSSPS. A Phosphothreonine modification is found at threonine 355. Serine 359 is modified (phosphoserine). Arginine 371 is subject to Omega-N-methylarginine. A Phosphoserine modification is found at serine 379. Residues 389-425 are leucine-zipper; it reads LQSKIEDHLDEAIHVLRSHAVGTAGDMHTLLPGHGAL. The interval 461–552 is disordered; that stretch reads NHAALPSQPG…KAEREKERRV (92 aa). Lysine 498 participates in a covalent cross-link: Glycyl lysine isopeptide (Lys-Gly) (interchain with G-Cter in SUMO2). Over residues 512 to 523 the composition is skewed to basic and acidic residues; it reads DHSEEEKKELKA. Serine 529 carries the post-translational modification Phosphoserine. Residue aspartate 531 is modified to Phosphothreonine. The segment covering 542–552 has biased composition (basic and acidic residues); that stretch reads QKAEREKERRV. The region spanning 549 to 602 is the bHLH domain; the sequence is ERRVANNARERLRVRDINEAFKELGRMCQLHLNSEKPQTKLLILHQAVSVILNL. Lysine 625 participates in a covalent cross-link: Glycyl lysine isopeptide (Lys-Gly) (interchain with G-Cter in SUMO2). The disordered stretch occupies residues 633 to 654; it reads PQMVLSAPHPGLSEAHNPAGHM.

In terms of assembly, homodimer. Heterodimer; efficient DNA binding requires dimerization with another bHLH protein. Forms a heterodimer with ASH1, TWIST1 and TWIST2. Forms a heterodimer with MYOG; heterodimerization enhances MYOG DNA-binding and transcriptional activities. Forms a heterodimer with NEUROD1; the heterodimer is inhibited in presence of ID2, but not NR0B2, to E-box element. Forms a heterodimer with TCF15; the heterodimer binds E-box element. Forms a heterodimer with ATOH8; repress transcription of TCF3 and TCF3/NEUROG3 dimer-induced transactivation of E box-dependent promoters. Component of a nuclear TAL-1 complex composed at least of CBFA2T3, LDB1, TAL1 and TCF3. Interacts with NEUROD2, PTF1A and TGFB1I1. Interacts with EP300 and UBE2I. Interacts with BHLHA9. Interacts with ASB2; the interaction is mediated by SKP2 and targets TCF3 for Notch-induced proteasomal degradation. Forms a heterodimer with ATOH7; required for ATOH7 DNA-binding. As to quaternary structure, interacts with RALGAPA1 and FIGLA. In terms of processing, phosphorylated following NGF stimulation. Post-translationally, undergoes Notch-induced ubiquitination and subsequent proteasomal degradation which is mediated by ASB1 or ASB2, the substrate-recognition components of probable ECS E3 ubiquitin-protein ligase complexes.

The protein localises to the nucleus. In terms of biological role, transcriptional regulator involved in the initiation of neuronal differentiation and mesenchymal to epithelial transition. Heterodimers between TCF3 and tissue-specific basic helix-loop-helix (bHLH) proteins play major roles in determining tissue-specific cell fate during embryogenesis, like muscle or early B-cell differentiation. Together with TCF15, required for the mesenchymal to epithelial transition. Dimers bind DNA on E-box motifs: 5'-CANNTG-3'. Binds to the kappa-E2 site in the kappa immunoglobulin gene enhancer. Binds to IEB1 and IEB2, which are short DNA sequences in the insulin gene transcription control region. Functionally, facilitates ATOH7 binding to DNA at the consensus sequence 5'-CAGGTG-3', and positively regulates transcriptional activity. This chain is Transcription factor E2-alpha (TCF3), found in Homo sapiens (Human).